The sequence spans 202 residues: uncharacterized protein (202 aa).

The segment at 179 to 202 is disordered; the sequence is FDEQDSTPELPPNYLLDSQKKSQG.

This is an uncharacterized protein from Haemophilus influenzae (strain ATCC 51907 / DSM 11121 / KW20 / Rd).